A 226-amino-acid polypeptide reads, in one-letter code: 7-cyano-7-deazaguanine synthase (226 aa).

Position 7–17 (7–17 (ISGGMDSLVVA)) interacts with ATP. 4 residues coordinate Zn(2+): Cys187, Cys195, Cys198, and Cys201.

This sequence belongs to the QueC family. Zn(2+) is required as a cofactor.

It carries out the reaction 7-carboxy-7-deazaguanine + NH4(+) + ATP = 7-cyano-7-deazaguanine + ADP + phosphate + H2O + H(+). It participates in purine metabolism; 7-cyano-7-deazaguanine biosynthesis. Catalyzes the ATP-dependent conversion of 7-carboxy-7-deazaguanine (CDG) to 7-cyano-7-deazaguanine (preQ(0)). The protein is 7-cyano-7-deazaguanine synthase of Chlorobium phaeobacteroides (strain BS1).